The sequence spans 122 residues: Large ribosomal subunit protein uL22 (122 aa).

The segment at 103 to 122 (VEGKEMKSSKSHKKNQAEGK) is disordered.

The protein belongs to the universal ribosomal protein uL22 family. As to quaternary structure, part of the 50S ribosomal subunit.

In terms of biological role, this protein binds specifically to 23S rRNA; its binding is stimulated by other ribosomal proteins, e.g. L4, L17, and L20. It is important during the early stages of 50S assembly. It makes multiple contacts with different domains of the 23S rRNA in the assembled 50S subunit and ribosome. The globular domain of the protein is located near the polypeptide exit tunnel on the outside of the subunit, while an extended beta-hairpin is found that lines the wall of the exit tunnel in the center of the 70S ribosome. The protein is Large ribosomal subunit protein uL22 of Helicobacter pylori (strain P12).